Here is a 336-residue protein sequence, read N- to C-terminus: Large ribosomal subunit protein uL3 (336 aa).

The segment at 1–34 (MVRHHQPRKGSVAFSPRKRAAKETPRIKSWPQND) is disordered.

The protein belongs to the universal ribosomal protein uL3 family. Part of the 50S ribosomal subunit. Forms a cluster with proteins L14 and L24e.

Functionally, one of the primary rRNA binding proteins, it binds directly near the 3'-end of the 23S rRNA, where it nucleates assembly of the 50S subunit. The polypeptide is Large ribosomal subunit protein uL3 (Methanobrevibacter smithii (strain ATCC 35061 / DSM 861 / OCM 144 / PS)).